The chain runs to 358 residues: Starch-binding domain-containing protein 1 (358 aa).

At 1–6 the chain is on the extracellular side; the sequence is MGAVWS. Residues 7-23 traverse the membrane as a helical segment; sequence ALLVGGGLAGALFVWLL. Residues 24-358 lie on the Cytoplasmic side of the membrane; sequence RGGPGDTGKD…KVVHAWWGIH (335 aa). Residues 30-42 show a composition bias toward basic and acidic residues; it reads TGKDGDAEQEKDA. Disordered stretches follow at residues 30-70 and 104-151; these read TGKD…QELV and SREV…SPMG. The span at 50–66 shows a compositional bias: low complexity; that stretch reads PGGHQSGSSGLSPGPSG. Ser65 carries the post-translational modification Phosphoserine. Basic and acidic residues predominate over residues 106-115; that stretch reads EVCDNSREHV. Ser117 carries the post-translational modification Phosphoserine. Polar residues predominate over residues 126-140; the sequence is PATSETSNSRSYSEV. Ser148, Ser175, Ser188, and Ser194 each carry phosphoserine. Positions 200–206 match the LIR motif; it reads HEEWEMV. A phosphoserine mark is found at Ser210, Ser211, and Ser220. A CBM20 domain is found at 258-357; sequence PAGSQQVSVR…DKVVHAWWGI (100 aa).

In terms of assembly, interacts with the ATG8 family proteins GABARAP and GABARAPL1. Interacts with several glycogen-associated proteins, such as GYS2 (liver glycogen synthase), GDE (glycogen debranching enzyme), GBE1 (glycogen branching enzyme 1) and EPM2A (Laforin). Ubiquitinated, which leads to proteasomal degradation. In terms of tissue distribution, expressed at high level in skeletal and cardiac muscles. Moderately expressed in liver and placenta. No expression is found in pancreas, kidney or lung. Present in skeletal muscle, heart and placenta (at protein level).

It is found in the preautophagosomal structure membrane. The protein resides in the endoplasmic reticulum membrane. Its subcellular location is the cell membrane. It localises to the sarcolemma. The protein localises to the T-tubule. Functionally, acts as a cargo receptor for glycogen. Delivers its cargo to an autophagic pathway called glycophagy, resulting in the transport of glycogen to lysosomes. In Homo sapiens (Human), this protein is Starch-binding domain-containing protein 1.